A 3023-amino-acid chain; its full sequence is Genome polyprotein (3023 aa).

The region spanning 132 to 274 (TCSSSGLDNL…QSITLRATHF (143 aa)) is the Peptidase S30 domain. Catalysis depends on for P1 proteinase activity residues His183, Asp192, and Ser225. Residues 325-328 (KITC) carry the Involved in interaction with stylet and aphid transmission motif. The Involved in virions binding and aphid transmission motif lies at 583–585 (PTK). Residues 609 to 731 (MYIAKEGYCY…ESPMAQYKVG (123 aa)) enclose the Peptidase C6 domain. Active-site for helper component proteinase activity residues include Cys617 and His690. Residues 1202–1354 (QIAHNEHKDI…TQYPVELLIE (153 aa)) enclose the Helicase ATP-binding domain. 1215-1222 (GAVGSGKS) contacts ATP. A DEFH box motif is present at residues 1304 to 1307 (DEFH). Positions 1367 to 1532 (GTDAHADVVK…GLPVTTQNVS (166 aa)) constitute a Helicase C-terminal domain. The GxxxG motif motif lies at 1796–1800 (GIGLG). A Nuclear localization signal motif is present at residues 1856–1863 (KKGKSKGK). Residue Tyr1878 is modified to O-(5'-phospho-RNA)-tyrosine. Residue Tyr1878 is modified to O-UMP-tyrosine; transient. Residues 2002 to 2218 (SKALLKGVRD…ISWGSFTLVE (217 aa)) form the Peptidase C4 domain. Catalysis depends on for nuclear inclusion protein A activity residues His2047, Asp2082, and Cys2152. The region spanning 2484–2608 (WVYCDADGSQ…AISPELEHVL (125 aa)) is the RdRp catalytic domain. A Phosphothreonine modification is found at Thr3006.

The protein belongs to the potyviridae genome polyprotein family. As to quaternary structure, interacts with host eIF4E protein (via cap-binding region); this interaction mediates the translation of the VPg-viral RNA conjugates. Part of a complex that comprises VPg, RNA, host EIF4E and EIF4G; this interaction mediates the translation of the VPg-viral RNA conjugates. In terms of processing, VPg is uridylylated by the polymerase and is covalently attached to the 5'-end of the genomic RNA. This uridylylated form acts as a nucleotide-peptide primer for the polymerase. Post-translationally, potyviral RNA is expressed as two polyproteins which undergo post-translational proteolytic processing. Genome polyprotein is processed by NIa-pro, P1 and HC-pro proteinases resulting in the production of at least ten individual proteins. P3N-PIPO polyprotein is cleaved by P1 and HC-pro proteinases resulting in the production of three individual proteins. The P1 proteinase and the HC-pro cleave only their respective C-termini autocatalytically. 6K1 is essential for proper proteolytic separation of P3 from CI.

It is found in the host cytoplasmic vesicle. Its subcellular location is the host nucleus. The protein resides in the virion. It carries out the reaction RNA(n) + a ribonucleoside 5'-triphosphate = RNA(n+1) + diphosphate. The enzyme catalyses Hydrolyzes glutaminyl bonds, and activity is further restricted by preferences for the amino acids in P6 - P1' that vary with the species of potyvirus, e.g. Glu-Xaa-Xaa-Tyr-Xaa-Gln-|-(Ser or Gly) for the enzyme from tobacco etch virus. The natural substrate is the viral polyprotein, but other proteins and oligopeptides containing the appropriate consensus sequence are also cleaved.. It catalyses the reaction Hydrolyzes a Gly-|-Gly bond at its own C-terminus, commonly in the sequence -Tyr-Xaa-Val-Gly-|-Gly, in the processing of the potyviral polyprotein.. In terms of biological role, required for aphid transmission and also has proteolytic activity. Only cleaves a Gly-Gly dipeptide at its own C-terminus. Interacts with virions and aphid stylets. Acts as a suppressor of RNA-mediated gene silencing, also known as post-transcriptional gene silencing (PTGS), a mechanism of plant viral defense that limits the accumulation of viral RNAs. May have RNA-binding activity. Its function is as follows. Has helicase activity. It may be involved in replication. Functionally, indispensable for virus replication. Reduces the abundance of host transcripts related to jasmonic acid biosynthesis therefore altering the host defenses. In order to increase its own stability, decreases host protein degradation pathways. Indispensable for virus replication. In terms of biological role, mediates the cap-independent, EIF4E-dependent translation of viral genomic RNAs. Binds to the cap-binding site of host EIF4E and thus interferes with the host EIF4E-dependent mRNA export and translation. VPg-RNA directly binds EIF4E and is a template for transcription. Also forms trimeric complexes with EIF4E-EIF4G, which are templates for translation. Its function is as follows. Has RNA-binding and proteolytic activities. Main protease that processes most of the polyprotein cleavages. Functionally, an RNA-dependent RNA polymerase that plays an essential role in the virus replication. Involved in aphid transmission, cell-to-cell and systemis movement, encapsidation of the viral RNA and in the regulation of viral RNA amplification. The protein is Genome polyprotein of Tobacco vein mottling virus (TVMV).